We begin with the raw amino-acid sequence, 739 residues long: Catalase-peroxidase (739 aa).

The first 23 residues, 1–23 (MLKKIVTALGMSGMLLASNSAIA), serve as a signal peptide directing secretion. The tryptophyl-tyrosyl-methioninium (Trp-Tyr) (with M-247) cross-link spans 100-221 (WHDAGTYRIY…YAATQMGLIY (122 aa)). Histidine 101 acts as the Proton acceptor in catalysis. The tryptophyl-tyrosyl-methioninium (Tyr-Met) (with W-100) cross-link spans 221–247 (YVNPEGPDGKPDIKGAASEIRQAFRAM). Residue histidine 262 participates in heme b binding.

Belongs to the peroxidase family. Peroxidase/catalase subfamily. In terms of assembly, homodimer or homotetramer. It depends on heme b as a cofactor. In terms of processing, formation of the three residue Trp-Tyr-Met cross-link is important for the catalase, but not the peroxidase activity of the enzyme.

The enzyme catalyses H2O2 + AH2 = A + 2 H2O. It carries out the reaction 2 H2O2 = O2 + 2 H2O. Functionally, bifunctional enzyme with both catalase and broad-spectrum peroxidase activity. This Francisella tularensis subsp. novicida (strain U112) protein is Catalase-peroxidase.